Reading from the N-terminus, the 78-residue chain is Cell division topological specificity factor (78 aa).

Belongs to the MinE family.

Functionally, prevents the cell division inhibition by proteins MinC and MinD at internal division sites while permitting inhibition at polar sites. This ensures cell division at the proper site by restricting the formation of a division septum at the midpoint of the long axis of the cell. This Helicobacter hepaticus (strain ATCC 51449 / 3B1) protein is Cell division topological specificity factor.